We begin with the raw amino-acid sequence, 885 residues long: DNA mismatch repair protein MutS (885 aa).

626 to 633 contacts ATP; that stretch reads GPNMGGKS.

The protein belongs to the DNA mismatch repair MutS family.

Functionally, this protein is involved in the repair of mismatches in DNA. It is possible that it carries out the mismatch recognition step. This protein has a weak ATPase activity. The protein is DNA mismatch repair protein MutS of Burkholderia orbicola (strain MC0-3).